A 703-amino-acid polypeptide reads, in one-letter code: Protein CNGC15c (703 aa).

Positions 1–10 (MGFDNPRSER) are enriched in basic and acidic residues. Residues 1-23 (MGFDNPRSERFEDDPEISKIPTT) are disordered. Transmembrane regions (helical) follow at residues 91–111 (IFLV…YLPV), 179–199 (GFWL…WIII), 216–236 (FFII…SSQI), 255–275 (LMLY…LSIE), and 372–392 (FIGE…LFAL). 480–565 (LFDQMDERML…WALDPRPSVI (86 aa)) provides a ligand contact to a nucleoside 3',5'-cyclic phosphate. Positions 616–644 (RTWAACFIQAAWRRHKKRKEAAELRAKEN) constitute an IQ domain. The disordered stretch occupies residues 676-703 (KGVNMHSGTNSGVVSSLQKPTEPDFSDE). Polar residues predominate over residues 681–694 (HSGTNSGVVSSLQK).

Belongs to the cyclic nucleotide-gated cation channel (TC 1.A.1.5) family. In terms of assembly, interacts (via N-terminus) with DMI1 (via c-terminus). The Nod factor has no effect on this interaction, implying that the complex is maintained after activation. As to expression, expressed in roots, stems, leaves, flowers and pods.

The protein localises to the nucleus membrane. Its function is as follows. Cyclic nucleotide-gated channel involved in the establishment of both rhizobial and mycorrhizal associations. Required for full activation of nuclear-localized Ca(2+) oscillations by Nod and Myc factors. Simultaneous activation of the K(+)-permeable channel DMI1 and the Ca(2+) channel CNGC15 can give rise to sustained Ca(2+) oscillations. May function during fertilization in both female and male gametophytic Ca(2+) signaling. The sequence is that of Protein CNGC15c from Medicago truncatula (Barrel medic).